Consider the following 253-residue polypeptide: Phosphoadenosine 5'-phosphosulfate reductase (253 aa).

Cys-239 functions as the Nucleophile; cysteine thiosulfonate intermediate in the catalytic mechanism.

The protein belongs to the PAPS reductase family. CysH subfamily.

It localises to the cytoplasm. The catalysed reaction is [thioredoxin]-disulfide + sulfite + adenosine 3',5'-bisphosphate + 2 H(+) = [thioredoxin]-dithiol + 3'-phosphoadenylyl sulfate. The protein operates within sulfur metabolism; hydrogen sulfide biosynthesis; sulfite from sulfate: step 3/3. Functionally, catalyzes the formation of sulfite from phosphoadenosine 5'-phosphosulfate (PAPS) using thioredoxin as an electron donor. The chain is Phosphoadenosine 5'-phosphosulfate reductase from Photobacterium profundum (strain SS9).